Here is a 728-residue protein sequence, read N- to C-terminus: MDKETIKAHKISDEEYAQILEILGREPNLLELGVISAMWSEHCSYKSSKKYLNGFPTKAPWVIQGPGENAGVIDIGQGMAAVFKVESHNHPSFIEPFAGAATGVGGILRDVFTMGARVVAGLNSLKFGDIHDEKCGKHQKYLVKGVVNGISHYGNCMGVPTIGGECAFDECFNGNILVNAFALGVCKSEDIFYAKAEGVGNPVIYVGSKTGRDGLGGAVMASDSFNEESKSLRPTVQIGDPFSEKLLMEACLELFKTDYIVGIQDMGAAGLTSSSFEMAGRSGSGMKLYLDKTPMRESGMTPYELMLSESQERMLICAKKGYEDKVIEIFKKWDLDAVVMGEVTNTGKMELFWHDELVGLIPIEPLSEKAPILSRPTSEPKYLSEIKNYKFELKSSVQELFIQMLQNENINNKAFIYDQFDSSVQTNTIKADGRLGASVIRIKENGASVAMAIECNSRLNYVNPKIGAALAVASAGRKVACTGAKPLAISDCLNYGNPQNPEVMWQFAQGCEGIKEACKELNTPVVSGNVSLYNETEGVSIYPSPTIVSVGVLEDANKTLKASFEKENLSVYLLGESLGEFSGSMVMKIQDKKVSGSLKELDYKAELALWDLLYKANQNSLLECANSVGIGGIAMTLAKMFAISSVGANLTSDFDDEKMIFDESASRAIIGLSKENEEAFLNLAKEFGVKAYKLGVSTSQKHFKLDSIELSKAELDKLYFESFKEQIQ.

His42 is a catalytic residue. Residues Tyr45 and Lys84 each coordinate ATP. Residue Glu86 coordinates Mg(2+). Substrate-binding positions include 87 to 90 and Arg109; that span reads SHNH. The active-site Proton acceptor is the His88. Asp110 serves as a coordination point for Mg(2+). Gln237 provides a ligand contact to substrate. Residue Asp265 coordinates Mg(2+). 309 to 311 lines the substrate pocket; sequence ESQ. Residues Asp491 and Gly528 each coordinate ATP. Mg(2+) is bound at residue Asn529. Substrate is bound at residue Ser531.

It belongs to the FGAMS family. In terms of assembly, monomer. Part of the FGAM synthase complex composed of 1 PurL, 1 PurQ and 2 PurS subunits.

The protein resides in the cytoplasm. The enzyme catalyses N(2)-formyl-N(1)-(5-phospho-beta-D-ribosyl)glycinamide + L-glutamine + ATP + H2O = 2-formamido-N(1)-(5-O-phospho-beta-D-ribosyl)acetamidine + L-glutamate + ADP + phosphate + H(+). The protein operates within purine metabolism; IMP biosynthesis via de novo pathway; 5-amino-1-(5-phospho-D-ribosyl)imidazole from N(2)-formyl-N(1)-(5-phospho-D-ribosyl)glycinamide: step 1/2. Part of the phosphoribosylformylglycinamidine synthase complex involved in the purines biosynthetic pathway. Catalyzes the ATP-dependent conversion of formylglycinamide ribonucleotide (FGAR) and glutamine to yield formylglycinamidine ribonucleotide (FGAM) and glutamate. The FGAM synthase complex is composed of three subunits. PurQ produces an ammonia molecule by converting glutamine to glutamate. PurL transfers the ammonia molecule to FGAR to form FGAM in an ATP-dependent manner. PurS interacts with PurQ and PurL and is thought to assist in the transfer of the ammonia molecule from PurQ to PurL. The chain is Phosphoribosylformylglycinamidine synthase subunit PurL from Campylobacter jejuni subsp. jejuni serotype O:23/36 (strain 81-176).